A 760-amino-acid chain; its full sequence is 5-methyltetrahydropteroyltriglutamate--homocysteine methyltransferase (760 aa).

5-methyltetrahydropteroyltri-L-glutamate is bound by residues 15 to 18 (RELK) and K114. L-homocysteine-binding positions include 436-438 (IGS) and E489. L-methionine is bound by residues 436-438 (IGS) and E489. 5-methyltetrahydropteroyltri-L-glutamate-binding positions include 520 to 521 (RC) and W566. An L-homocysteine-binding site is contributed by D604. An L-methionine-binding site is contributed by D604. E610 contacts 5-methyltetrahydropteroyltri-L-glutamate. Positions 646, 648, and 670 each coordinate Zn(2+). The active-site Proton donor is the H699. A Zn(2+)-binding site is contributed by C731.

Belongs to the vitamin-B12 independent methionine synthase family. It depends on Zn(2+) as a cofactor.

The catalysed reaction is 5-methyltetrahydropteroyltri-L-glutamate + L-homocysteine = tetrahydropteroyltri-L-glutamate + L-methionine. The protein operates within amino-acid biosynthesis; L-methionine biosynthesis via de novo pathway; L-methionine from L-homocysteine (MetE route): step 1/1. Functionally, catalyzes the transfer of a methyl group from 5-methyltetrahydrofolate to homocysteine resulting in methionine formation. In Shewanella oneidensis (strain ATCC 700550 / JCM 31522 / CIP 106686 / LMG 19005 / NCIMB 14063 / MR-1), this protein is 5-methyltetrahydropteroyltriglutamate--homocysteine methyltransferase.